Here is a 72-residue protein sequence, read N- to C-terminus: Translation initiation factor IF-1 (72 aa).

Positions 1 to 72 (MAKADVIEVE…TKGRITFRFK (72 aa)) constitute an S1-like domain.

This sequence belongs to the IF-1 family. In terms of assembly, component of the 30S ribosomal translation pre-initiation complex which assembles on the 30S ribosome in the order IF-2 and IF-3, IF-1 and N-formylmethionyl-tRNA(fMet); mRNA recruitment can occur at any time during PIC assembly.

Its subcellular location is the cytoplasm. In terms of biological role, one of the essential components for the initiation of protein synthesis. Stabilizes the binding of IF-2 and IF-3 on the 30S subunit to which N-formylmethionyl-tRNA(fMet) subsequently binds. Helps modulate mRNA selection, yielding the 30S pre-initiation complex (PIC). Upon addition of the 50S ribosomal subunit IF-1, IF-2 and IF-3 are released leaving the mature 70S translation initiation complex. This is Translation initiation factor IF-1 from Limosilactobacillus reuteri (strain DSM 20016) (Lactobacillus reuteri).